The primary structure comprises 596 residues: Linalool synthase TPS3, chloroplastic (596 aa).

The N-terminal 39 residues, 1-39, are a transit peptide targeting the chloroplast; the sequence is MISSLNPLFTTHRSGVIAQQFFASSAAASINSVSSLKIA. (2E)-geranyl diphosphate-binding residues include Arg-308, Asp-345, Asp-349, Arg-486, and Asn-489. 2 residues coordinate Mg(2+): Asp-345 and Asp-349. Positions 345–349 match the DDXXD motif motif; the sequence is DDIYD. Mg(2+) contacts are provided by Asn-489, Thr-493, and Ser-497.

Belongs to the terpene synthase family. Tpsb subfamily. Monomer. It depends on Mg(2+) as a cofactor. Mn(2+) serves as cofactor. Expressed in flowers and fruits.

It localises to the plastid. It is found in the chloroplast. It catalyses the reaction (2E)-geranyl diphosphate = beta-myrcene + diphosphate. The catalysed reaction is (2E)-geranyl diphosphate + H2O = linalool + diphosphate. It carries out the reaction (2E)-geranyl diphosphate = (Z)-beta-ocimene + diphosphate. The enzyme catalyses (2E)-geranyl diphosphate = (E)-beta-ocimene + diphosphate. Its pathway is secondary metabolite biosynthesis; terpenoid biosynthesis. Its function is as follows. Monoterpene synthase (mono-TPS) involved in the biosynthesis of monoterpenes natural products, constituent of coffee beverage aroma. Catalyzes the conversion of (2E)-geranyl diphosphate (GPP) into linalool and beta-myrcene, and, as minor products, cis-ocimene and trans-ocimene. Not able to use geranylgeranyl pyrophosphate (GGPP) and farnesyl pyrophosphate (FPP) as substrates. The chain is Linalool synthase TPS3, chloroplastic from Coffea arabica (Arabian coffee).